The following is a 703-amino-acid chain: Cyclomaltodextrin glucanotransferase (703 aa).

Positions 1-29 (MNDLNDFLKTILLSFIFFLLLSLPTVAEA) are cleaved as a signal peptide. Positions 30–160 (DVTNKVNYSK…GIKVIMDFTP (131 aa)) are A1. Residues Asp-52, Asn-54, Asn-57, and Asn-58 each coordinate Ca(2+). Cys-68 and Cys-75 are joined by a disulfide. Ca(2+) is bound by residues Gly-76 and Asp-78. 122–123 (YW) serves as a coordination point for substrate. Residue Asn-161 participates in Ca(2+) binding. The b stretch occupies residues 161 to 224 (NHSSPALETN…NLYDLADYDL (64 aa)). His-162 is a substrate binding site. Ile-212 lines the Ca(2+) pocket. 215–218 (NLYD) is a substrate binding site. Asp-221 serves as a coordination point for Ca(2+). The interval 225–428 (NNTVMDQYLK…LRQTNSALGY (204 aa)) is A2. Arg-249 is a substrate binding site. The active-site Nucleophile is Asp-251. 254–255 (KH) serves as a coordination point for substrate. His-255 lines the Ca(2+) pocket. The Proton donor role is filled by Glu-279. Residues His-349, Asp-393, and Arg-397 each coordinate substrate. The interval 429–516 (GTTTERWLNE…SVAVWQVSNP (88 aa)) is c. The segment at 517–600 (STSPLIGQVG…SPTYKEFEVL (84 aa)) is d. An IPT/TIG domain is found at 520-598 (PLIGQVGPMM…IKSPTYKEFE (79 aa)). Residues 599–703 (VLSGNQVSVR…TGTDTVMINW (105 aa)) enclose the CBM20 domain. The tract at residues 601-703 (SGNQVSVRFG…TGTDTVMINW (103 aa)) is e.

Belongs to the glycosyl hydrolase 13 family. Monomer. Ca(2+) serves as cofactor.

The protein resides in the secreted. The enzyme catalyses Cyclizes part of a (1-&gt;4)-alpha-D-glucan chain by formation of a (1-&gt;4)-alpha-D-glucosidic bond.. The sequence is that of Cyclomaltodextrin glucanotransferase (cgt) from Bacillus sp. (strain 1-1).